The primary structure comprises 515 residues: Bifunctional pantoate ligase/cytidylate kinase (515 aa).

The interval 1–279 (MKVVETVARL…VGSTRLIDNV (279 aa)) is pantoate--beta-alanine ligase. 31-38 (MGALHEGH) is a binding site for ATP. H38 acts as the Proton donor in catalysis. (R)-pantoate is bound at residue Q62. Q62 lines the beta-alanine pocket. Residue 149-152 (GQKD) coordinates ATP. Q155 contacts (R)-pantoate. Residues V178 and 186–189 (LSSR) contribute to the ATP site. The cytidylate kinase stretch occupies residues 280–515 (VLGQHHERRP…LYRDKVGGSV (236 aa)).

This sequence in the N-terminal section; belongs to the pantothenate synthetase family. It in the C-terminal section; belongs to the cytidylate kinase family. Type 1 subfamily.

It localises to the cytoplasm. It catalyses the reaction (R)-pantoate + beta-alanine + ATP = (R)-pantothenate + AMP + diphosphate + H(+). It carries out the reaction CMP + ATP = CDP + ADP. The enzyme catalyses dCMP + ATP = dCDP + ADP. Its pathway is cofactor biosynthesis; (R)-pantothenate biosynthesis; (R)-pantothenate from (R)-pantoate and beta-alanine: step 1/1. Catalyzes the condensation of pantoate with beta-alanine in an ATP-dependent reaction via a pantoyl-adenylate intermediate. Functionally, catalyzes the transfer of a phosphate group from ATP to either CMP or dCMP to form CDP or dCDP and ADP, respectively. This chain is Bifunctional pantoate ligase/cytidylate kinase, found in Gloeobacter violaceus (strain ATCC 29082 / PCC 7421).